The following is a 187-amino-acid chain: Elongation factor P (187 aa).

Belongs to the elongation factor P family.

The protein resides in the cytoplasm. It functions in the pathway protein biosynthesis; polypeptide chain elongation. Its function is as follows. Involved in peptide bond synthesis. Stimulates efficient translation and peptide-bond synthesis on native or reconstituted 70S ribosomes in vitro. Probably functions indirectly by altering the affinity of the ribosome for aminoacyl-tRNA, thus increasing their reactivity as acceptors for peptidyl transferase. In Bifidobacterium animalis subsp. lactis (strain AD011), this protein is Elongation factor P.